The sequence spans 311 residues: Probable manganese-dependent inorganic pyrophosphatase (311 aa).

Mn(2+) is bound by residues H9, D13, D15, D77, H99, and D151.

Belongs to the PPase class C family. It depends on Mn(2+) as a cofactor.

It is found in the cytoplasm. It catalyses the reaction diphosphate + H2O = 2 phosphate + H(+). The sequence is that of Probable manganese-dependent inorganic pyrophosphatase from Streptococcus equi subsp. zooepidemicus (strain H70).